A 375-amino-acid chain; its full sequence is Succinyl-diaminopimelate desuccinylase (375 aa).

Histidine 66 provides a ligand contact to Zn(2+). The active site involves aspartate 68. Aspartate 99 is a binding site for Zn(2+). The active-site Proton acceptor is the glutamate 133. Glutamate 134, glutamate 162, and histidine 348 together coordinate Zn(2+).

The protein belongs to the peptidase M20A family. DapE subfamily. Homodimer. Zn(2+) is required as a cofactor. The cofactor is Co(2+).

The enzyme catalyses N-succinyl-(2S,6S)-2,6-diaminopimelate + H2O = (2S,6S)-2,6-diaminopimelate + succinate. It functions in the pathway amino-acid biosynthesis; L-lysine biosynthesis via DAP pathway; LL-2,6-diaminopimelate from (S)-tetrahydrodipicolinate (succinylase route): step 3/3. Functionally, catalyzes the hydrolysis of N-succinyl-L,L-diaminopimelic acid (SDAP), forming succinate and LL-2,6-diaminopimelate (DAP), an intermediate involved in the bacterial biosynthesis of lysine and meso-diaminopimelic acid, an essential component of bacterial cell walls. The chain is Succinyl-diaminopimelate desuccinylase from Yersinia pestis bv. Antiqua (strain Antiqua).